We begin with the raw amino-acid sequence, 410 residues long: Putative ankyrin repeat protein FPV240 (410 aa).

ANK repeat units lie at residues 33–62 (NGYS…YPDY), 66–95 (DIES…FIND), 100–129 (KGNT…DTDV), 133–162 (DRFT…CTNI), 166–195 (YGCT…NIDY), and 200–229 (PCVT…DSNI).

The chain is Putative ankyrin repeat protein FPV240 from Vertebrata (FPV).